Here is a 170-residue protein sequence, read N- to C-terminus: Large ribosomal subunit protein bL17 (170 aa).

Positions 134–144 (ASAKAAQAQEK) are enriched in low complexity. The segment at 134 to 170 (ASAKAAQAQEKPAQEEEVEATSDEVAYTSEPDKAAEH) is disordered.

This sequence belongs to the bacterial ribosomal protein bL17 family. Part of the 50S ribosomal subunit. Contacts protein L32.

The sequence is that of Large ribosomal subunit protein bL17 from Mycobacterium leprae (strain Br4923).